We begin with the raw amino-acid sequence, 197 residues long: Putative manganese efflux pump MntP 1 (197 aa).

6 consecutive transmembrane segments (helical) span residues 8 to 28 (VILLAIALAMDAFAVSIGLGA), 43 to 63 (VYAALYFGIAQGVMPLIGYLL), 66 to 86 (VLLGWLATAAPWLGGGILILL), 123 to 143 (LAIATSIDAMAAGFTLNLLAL), 146 to 166 (WLACSIIAIVTAGFGFFGIYL), and 176 to 196 (DKAEILGGLVLIAIGIKVMFI).

It belongs to the MntP (TC 9.B.29) family.

The protein localises to the cell inner membrane. In terms of biological role, probably functions as a manganese efflux pump. The sequence is that of Putative manganese efflux pump MntP 1 from Psychrobacter cryohalolentis (strain ATCC BAA-1226 / DSM 17306 / VKM B-2378 / K5).